Reading from the N-terminus, the 198-residue chain is NADH-quinone oxidoreductase subunit I (198 aa).

4Fe-4S ferredoxin-type domains follow at residues 42-72 and 88-117; these read LNRW…VEGA and RVYE…MTND. Positions 52, 55, 58, 62, 97, 100, 103, and 107 each coordinate [4Fe-4S] cluster. The segment at 137-198 is disordered; sequence APLKEGMEQP…DTQHKDEEAA (62 aa). A compositionally biased stretch (basic and acidic residues) spans 182-198; that stretch reads AHRDDDNDTQHKDEEAA.

The protein belongs to the complex I 23 kDa subunit family. NDH-1 is composed of 14 different subunits. Subunits NuoA, H, J, K, L, M, N constitute the membrane sector of the complex. [4Fe-4S] cluster serves as cofactor.

The protein resides in the cell membrane. It catalyses the reaction a quinone + NADH + 5 H(+)(in) = a quinol + NAD(+) + 4 H(+)(out). Functionally, NDH-1 shuttles electrons from NADH, via FMN and iron-sulfur (Fe-S) centers, to quinones in the respiratory chain. The immediate electron acceptor for the enzyme in this species is believed to be ubiquinone. Couples the redox reaction to proton translocation (for every two electrons transferred, four hydrogen ions are translocated across the cytoplasmic membrane), and thus conserves the redox energy in a proton gradient. The protein is NADH-quinone oxidoreductase subunit I of Cutibacterium acnes (strain DSM 16379 / KPA171202) (Propionibacterium acnes).